A 140-amino-acid chain; its full sequence is Small ribosomal subunit protein uS12m (140 aa).

This sequence belongs to the universal ribosomal protein uS12 family.

The protein resides in the mitochondrion. The sequence is that of Small ribosomal subunit protein uS12m (mrps12) from Dictyostelium discoideum (Social amoeba).